We begin with the raw amino-acid sequence, 335 residues long: Histidinol-phosphatase (335 aa).

This sequence belongs to the PHP hydrolase family. HisK subfamily.

The enzyme catalyses L-histidinol phosphate + H2O = L-histidinol + phosphate. It participates in amino-acid biosynthesis; L-histidine biosynthesis; L-histidine from 5-phospho-alpha-D-ribose 1-diphosphate: step 8/9. The polypeptide is Histidinol-phosphatase (HIS2) (Saccharomyces cerevisiae (strain ATCC 204508 / S288c) (Baker's yeast)).